We begin with the raw amino-acid sequence, 1085 residues long: Error-prone DNA polymerase 2 (1085 aa).

Residues 1040-1066 form a disordered region; it reads AGRGDEFAHGGGGPDSRDRQKPVVPRD.

The protein belongs to the DNA polymerase type-C family. DnaE2 subfamily.

It localises to the cytoplasm. It carries out the reaction DNA(n) + a 2'-deoxyribonucleoside 5'-triphosphate = DNA(n+1) + diphosphate. DNA polymerase involved in damage-induced mutagenesis and translesion synthesis (TLS). It is not the major replicative DNA polymerase. The sequence is that of Error-prone DNA polymerase 2 from Agrobacterium fabrum (strain C58 / ATCC 33970) (Agrobacterium tumefaciens (strain C58)).